We begin with the raw amino-acid sequence, 81 residues long: Trefoil factor 1 (81 aa).

Residues Met1–Gly23 form the signal peptide. The region spanning Glu26–Val69 is the P-type domain. 3 cysteine pairs are disulfide-bonded: Cys28–Cys54, Cys38–Cys53, and Cys48–Cys65.

The protein localises to the secreted. Functionally, stabilizer of the mucous gel overlying the gastrointestinal mucosa that provides a physical barrier against various noxious agents. This chain is Trefoil factor 1 (TFF1), found in Canis lupus familiaris (Dog).